The sequence spans 239 residues: Increased recombination centers protein 22-2 (239 aa).

The first 19 residues, 1–19 (MKLSTIFTAFAATIATVAG), serve as a signal peptide directing secretion. At 20 to 161 (YETTGSKQTV…AAVSFFDPRL (142 aa)) the chain is on the lumenal side. The helical transmembrane segment at 162–182 (IFLELVLLITFAGLIYVGYEI) threads the bilayer. Residues 183–239 (WGKQYFKGVAPVKAKKVSAAKASSPVATGPSTTSATGYDTNWIPESHLKQKKTKKVN) are Cytoplasmic-facing. The interval 202-222 (AKASSPVATGPSTTSATGYDT) is disordered. Residues 211-221 (GPSTTSATGYD) show a composition bias toward polar residues.

Belongs to the IRC22 family.

It localises to the endoplasmic reticulum membrane. Functionally, is probably involved in a pathway contributing to genomic integrity. The protein is Increased recombination centers protein 22-2 (IRC22-2) of Candida albicans (strain SC5314 / ATCC MYA-2876) (Yeast).